The chain runs to 542 residues: 4-coumarate--CoA ligase-like 1 (542 aa).

ATP is bound by residues Ser189, Ser190, Gly191, Thr192, Thr193, and Lys197. Residue Tyr237 participates in (E)-4-coumaroyl-AMP binding. Arg258 contributes to the CoA binding site. The segment at 260 to 331 (DLRIFLNALI…AKFPNVQVQE (72 aa)) is SBD1. Positions 309, 331, 332, and 336 each coordinate (E)-4-coumaroyl-AMP. Residues Glu331, Ala332, Thr336, Asp420, and Arg435 each coordinate ATP. The segment at 332–399 (AYGLTEHSCI…VRSQCVMQGY (68 aa)) is SBD2. 2 residues coordinate (E)-4-coumaroyl-AMP: Lys437 and Lys441. Positions 443 and 444 each coordinate CoA. Lys526 is an ATP binding site.

Belongs to the ATP-dependent AMP-binding enzyme family. Interacts with TKPR1, PKSA and PKSB. Mg(2+) serves as cofactor. As to expression, mostly confined to anther tapetal cells.

The protein localises to the endoplasmic reticulum. It catalyses the reaction (E)-4-coumarate + ATP + CoA = (E)-4-coumaroyl-CoA + AMP + diphosphate. It carries out the reaction (E)-4-coumarate + ATP + H(+) = (E)-4-coumaroyl-AMP + diphosphate. The enzyme catalyses (E)-4-coumaroyl-AMP + CoA = (E)-4-coumaroyl-CoA + AMP + H(+). Functionally, carboxylate--CoA ligase that may use 4-coumarate as substrate. Follows a two-step reaction mechanism, wherein the carboxylate substrate first undergoes adenylation by ATP, followed by a thioesterification in the presence of CoA to yield the final CoA thioester. The chain is 4-coumarate--CoA ligase-like 1 from Arabidopsis thaliana (Mouse-ear cress).